Reading from the N-terminus, the 265-residue chain is Protein synthesis inhibitor PD-S2 (265 aa).

2 disulfides stabilise this stretch: Cys34–Cys262 and Cys88–Cys110. Asn120 carries an N-linked (GlcNAc...) asparagine glycan.

The protein belongs to the ribosome-inactivating protein family. Type 1 RIP subfamily. Post-translationally, glycosylated. In terms of tissue distribution, seeds.

The enzyme catalyses Endohydrolysis of the N-glycosidic bond at one specific adenosine on the 28S rRNA.. Inhibits protein synthesis in animal cells. Useful as immunotoxin for pharmacological applications. The chain is Protein synthesis inhibitor PD-S2 from Phytolacca dioica (Bella sombra tree).